We begin with the raw amino-acid sequence, 193 residues long: Peptidyl-tRNA hydrolase (193 aa).

TRNA is bound at residue tyrosine 16. Histidine 21 acts as the Proton acceptor in catalysis. Residues tyrosine 66, asparagine 68, and asparagine 114 each contribute to the tRNA site.

This sequence belongs to the PTH family. In terms of assembly, monomer.

It is found in the cytoplasm. It catalyses the reaction an N-acyl-L-alpha-aminoacyl-tRNA + H2O = an N-acyl-L-amino acid + a tRNA + H(+). Hydrolyzes ribosome-free peptidyl-tRNAs (with 1 or more amino acids incorporated), which drop off the ribosome during protein synthesis, or as a result of ribosome stalling. In terms of biological role, catalyzes the release of premature peptidyl moieties from peptidyl-tRNA molecules trapped in stalled 50S ribosomal subunits, and thus maintains levels of free tRNAs and 50S ribosomes. The sequence is that of Peptidyl-tRNA hydrolase from Geobacter sulfurreducens (strain ATCC 51573 / DSM 12127 / PCA).